Reading from the N-terminus, the 177-residue chain is Large ribosomal subunit protein uL6 (177 aa).

The protein belongs to the universal ribosomal protein uL6 family. In terms of assembly, part of the 50S ribosomal subunit.

Functionally, this protein binds to the 23S rRNA, and is important in its secondary structure. It is located near the subunit interface in the base of the L7/L12 stalk, and near the tRNA binding site of the peptidyltransferase center. The sequence is that of Large ribosomal subunit protein uL6 from Mannheimia succiniciproducens (strain KCTC 0769BP / MBEL55E).